Here is a 442-residue protein sequence, read N- to C-terminus: Transcriptional coactivator YAP1 (442 aa).

Residues serine 21, serine 69, and serine 87 each carry the phosphoserine; by LATS1 and LATS2 modification. 2 disordered regions span residues 51 to 89 and 97 to 116; these read LPDSFFTPPEPKSHSRQASTDAGTAGTVTPHHVRAHSSP and VSPGALTSMGPANAPPQHLR. At serine 119 the chain carries Phosphoserine; by LATS1 and LATS2. 2 WW domains span residues 126 to 159 and 186 to 219; these read MPLPPGWEMAKTPSGQRYFLNHNDQTTTWQDPRK and GPLPDGWEQAITSEGEIYYINHKNKTTSWLDPRL. The segment at 230-254 is disordered; the sequence is ISQSAPVKQGSQLPSSPQSGVMSGN. Low complexity predominate over residues 238-249; the sequence is QGSQLPSSPQSG. A transactivation domain region spans residues 247 to 442; sequence QSGVMSGNNP…IDKENFLTWL (196 aa). Positions 258-279 form a coiled coil; sequence RLQQIHIEKERLRIKQELLRQR. A disordered region spans residues 286-374; the sequence is RNQLPTSMEQ…DTLGPGSMAT (89 aa). 3 stretches are compositionally biased toward polar residues: residues 288–304, 313–329, and 337–347; these read QLPTSMEQDGGTQNPVS, RNMTTNSSDPFLNSGTY, and DSGLSMSSYSV.

The protein belongs to the YAP1 family. Post-translationally, phosphorylated by lats1 and lats2; leading to cytoplasmic translocation and inactivation. As to expression, expressed in the notochord, brain, eyes, branchial arches and pectoral fins.

Its subcellular location is the cytoplasm. It localises to the nucleus. The protein resides in the cell junction. The protein localises to the tight junction. It is found in the cell membrane. Its function is as follows. Transcriptional regulator which can act both as a coactivator and a corepressor and is the critical downstream regulatory target in the Hippo signaling pathway that plays a pivotal role in organ size control and tumor suppression by restricting proliferation and promoting apoptosis. Required for expansion of the neural plate and neural plate border zone progenitor pools. Acts as a direct regulator of pax3 expression via interaction with tead1. Plays a key role in tissue tension and 3D tissue shape by regulating cortical actomyosin network formation. In Danio rerio (Zebrafish), this protein is Transcriptional coactivator YAP1 (yap1).